An 843-amino-acid chain; its full sequence is Protein P (843 aa).

Residues 1 to 177 (MPLSYQHFRR…FCGSPYSWEQ (177 aa)) form a terminal protein domain (TP) region. Residues 178–346 (ELQHGSTSLN…YCLSHIINLL (169 aa)) are spacer. The tract at residues 228–316 (KQGQLANGKQ…VPPSTVGSES (89 aa)) is disordered. Polar residues-rich tracts occupy residues 262-276 (TGHS…TSRF), 286-299 (NPSL…TSTG), and 307-316 (VPPSTVGSES). A polymerase/reverse transcriptase domain (RT) region spans residues 347-690 (EDWGPCYEHG…YMNLYPVARQ (344 aa)). The Reverse transcriptase domain maps to 357–600 (EHHIRTPRTP…YSLHFMGYII (244 aa)). Mg(2+) is bound by residues aspartate 429, aspartate 551, and aspartate 552.

The protein belongs to the hepadnaviridae P protein family.

It carries out the reaction DNA(n) + a 2'-deoxyribonucleoside 5'-triphosphate = DNA(n+1) + diphosphate. It catalyses the reaction Endonucleolytic cleavage to 5'-phosphomonoester.. Activated by host HSP70 and HSP40 in vitro to be able to bind the epsilon loop of the pgRNA. Because deletion of the RNase H region renders the protein partly chaperone-independent, the chaperones may be needed indirectly to relieve occlusion of the RNA-binding site by this domain. Inhibited by several reverse-transcriptase inhibitors: Lamivudine, Adefovir and Entecavir. In terms of biological role, multifunctional enzyme that converts the viral RNA genome into dsDNA in viral cytoplasmic capsids. This enzyme displays a DNA polymerase activity that can copy either DNA or RNA templates, and a ribonuclease H (RNase H) activity that cleaves the RNA strand of RNA-DNA heteroduplexes in a partially processive 3'- to 5'-endonucleasic mode. Neo-synthesized pregenomic RNA (pgRNA) are encapsidated together with the P protein, and reverse-transcribed inside the nucleocapsid. Initiation of reverse-transcription occurs first by binding the epsilon loop on the pgRNA genome, and is initiated by protein priming, thereby the 5'-end of (-)DNA is covalently linked to P protein. Partial (+)DNA is synthesized from the (-)DNA template and generates the relaxed circular DNA (RC-DNA) genome. After budding and infection, the RC-DNA migrates in the nucleus, and is converted into a plasmid-like covalently closed circular DNA (cccDNA). The activity of P protein does not seem to be necessary for cccDNA generation, and is presumably released from (+)DNA by host nuclear DNA repair machinery. This Homo sapiens (Human) protein is Protein P.